The primary structure comprises 306 residues: Agmatinase (306 aa).

6 residues coordinate Mn(2+): histidine 126, aspartate 149, histidine 151, aspartate 153, aspartate 230, and aspartate 232.

Belongs to the arginase family. Agmatinase subfamily. Requires Mn(2+) as cofactor.

It carries out the reaction agmatine + H2O = urea + putrescine. It functions in the pathway amine and polyamine biosynthesis; putrescine biosynthesis via agmatine pathway; putrescine from agmatine: step 1/1. In terms of biological role, catalyzes the formation of putrescine from agmatine. The protein is Agmatinase of Escherichia coli O7:K1 (strain IAI39 / ExPEC).